The sequence spans 619 residues: UPF0329 protein ECU08_2070 (619 aa).

Basic and acidic residues-rich tracts occupy residues 350–359 (EREKREESKG) and 369–385 (GAGE…RKEE). Residues 350-425 (EREKREESKG…REKKMGEEHH (76 aa)) form a disordered region. A compositionally biased stretch (acidic residues) spans 386–396 (EGVEVEEEESA).

This sequence belongs to the UPF0329 family.

The chain is UPF0329 protein ECU08_2070 from Encephalitozoon cuniculi (strain GB-M1) (Microsporidian parasite).